A 163-amino-acid polypeptide reads, in one-letter code: UPF0478 protein SERP1299 (163 aa).

Residues 7–27 (IAGIIAAIAFLILCIGIVVVL) traverse the membrane as a helical segment.

This sequence belongs to the UPF0478 family.

The protein localises to the cell membrane. The chain is UPF0478 protein SERP1299 from Staphylococcus epidermidis (strain ATCC 35984 / DSM 28319 / BCRC 17069 / CCUG 31568 / BM 3577 / RP62A).